A 348-amino-acid chain; its full sequence is Olfactory receptor 2T4 (348 aa).

The Extracellular segment spans residues 1–57 (MDNITWMASHTGWSDFILMGLFRQSKHPMANITWMANHTGWSDFILLGLFRQSKHPA). 2 N-linked (GlcNAc...) asparagine glycosylation sites follow: asparagine 31 and asparagine 37. A helical transmembrane segment spans residues 58–81 (LLCVVIFVVFLMALSGNAVLILLI). The Cytoplasmic segment spans residues 82 to 89 (HCDAHLHT). A helical transmembrane segment spans residues 90–111 (PMYFFISQLSLMDMAYISVTVP). At 112 to 132 (KMLLDQVMGVNKISAPECGMQ) the chain is on the extracellular side. Cysteines 129 and 221 form a disulfide. The chain crosses the membrane as a helical span at residues 133 to 152 (MFFYVTLAGSEFFLLATMAY). At 153 to 171 (DRYVAICHPLRYPVLMNHR) the chain is on the cytoplasmic side. A helical membrane pass occupies residues 172–190 (VCLFLSSGCWFLGSVDGFT). Topologically, residues 191–227 (FTPITMTFPFRGSREIHHFFCEVPAVLNLSCSDTSLY) are extracellular. Asparagine 218 carries an N-linked (GlcNAc...) asparagine glycan. Residues 228–251 (EIFMYLCCVLMLLIPVVIISSSYL) traverse the membrane as a helical segment. Over 252-268 (LILLTIHGMNSAEGRKK) the chain is Cytoplasmic. The chain crosses the membrane as a helical span at residues 269 to 291 (AFATCSSHLTVVILFYGAAIYTY). Topologically, residues 292-304 (MLPSSYHTPEKDM) are extracellular. Residues 305-324 (MVSVFYTILTPVVNPLIYSL) traverse the membrane as a helical segment. At 325-348 (RNKDVMGALKKMLTVEPAFQKAME) the chain is on the cytoplasmic side.

This sequence belongs to the G-protein coupled receptor 1 family.

The protein resides in the cell membrane. Odorant receptor. The polypeptide is Olfactory receptor 2T4 (OR2T4) (Homo sapiens (Human)).